A 440-amino-acid chain; its full sequence is Trigger factor (440 aa).

The PPIase FKBP-type domain maps to 161 to 257; it reads GDYVKLAYEG…VLEVRERVLP (97 aa).

The protein belongs to the FKBP-type PPIase family. Tig subfamily.

It is found in the cytoplasm. The enzyme catalyses [protein]-peptidylproline (omega=180) = [protein]-peptidylproline (omega=0). In terms of biological role, involved in protein export. Acts as a chaperone by maintaining the newly synthesized protein in an open conformation. Functions as a peptidyl-prolyl cis-trans isomerase. This Opitutus terrae (strain DSM 11246 / JCM 15787 / PB90-1) protein is Trigger factor.